A 304-amino-acid polypeptide reads, in one-letter code: Ribokinase (304 aa).

Substrate is bound by residues Asn-12–Asp-14, Gly-41–Asn-45, and Glu-142. Residues Asn-186 and Thr-222 to Gly-227 contribute to the ATP site. K(+) is bound by residues Asp-248 and Thr-250. Residues Gly-253–Asp-254 and Asn-279 contribute to the ATP site. Asp-254 provides a ligand contact to substrate. Asp-254 serves as the catalytic Proton acceptor. 4 residues coordinate K(+): Thr-285, Lys-288, Gly-290, and Ser-294.

The protein belongs to the carbohydrate kinase PfkB family. Ribokinase subfamily. In terms of assembly, homodimer. Mg(2+) serves as cofactor.

It is found in the cytoplasm. The catalysed reaction is D-ribose + ATP = D-ribose 5-phosphate + ADP + H(+). It functions in the pathway carbohydrate metabolism; D-ribose degradation; D-ribose 5-phosphate from beta-D-ribopyranose: step 2/2. Its activity is regulated as follows. Activated by a monovalent cation that binds near, but not in, the active site. The most likely occupant of the site in vivo is potassium. Ion binding induces a conformational change that may alter substrate affinity. Functionally, catalyzes the phosphorylation of ribose at O-5 in a reaction requiring ATP and magnesium. The resulting D-ribose-5-phosphate can then be used either for sythesis of nucleotides, histidine, and tryptophan, or as a component of the pentose phosphate pathway. The protein is Ribokinase of Staphylococcus aureus (strain COL).